A 268-amino-acid polypeptide reads, in one-letter code: Ribosomal RNA small subunit methyltransferase A (268 aa).

6 residues coordinate S-adenosyl-L-methionine: Asn18, Leu20, Gly45, Glu66, Asp91, and Asn112.

This sequence belongs to the class I-like SAM-binding methyltransferase superfamily. rRNA adenine N(6)-methyltransferase family. RsmA subfamily.

Its subcellular location is the cytoplasm. It carries out the reaction adenosine(1518)/adenosine(1519) in 16S rRNA + 4 S-adenosyl-L-methionine = N(6)-dimethyladenosine(1518)/N(6)-dimethyladenosine(1519) in 16S rRNA + 4 S-adenosyl-L-homocysteine + 4 H(+). In terms of biological role, specifically dimethylates two adjacent adenosines (A1518 and A1519) in the loop of a conserved hairpin near the 3'-end of 16S rRNA in the 30S particle. May play a critical role in biogenesis of 30S subunits. The sequence is that of Ribosomal RNA small subunit methyltransferase A from Shewanella baltica (strain OS185).